Reading from the N-terminus, the 505-residue chain is Salutaridine synthase (505 aa).

Residues 10–30 (DFWMIACTVIIVFALVKFMFS) form a helical membrane-spanning segment. Cysteine 444 is a heme binding site.

This sequence belongs to the cytochrome P450 family. Heme is required as a cofactor.

The protein localises to the endoplasmic reticulum membrane. It carries out the reaction (R)-reticuline + reduced [NADPH--hemoprotein reductase] + O2 = salutaridine + oxidized [NADPH--hemoprotein reductase] + 2 H2O + H(+). Cytochrome P450 monooxygenase involved in biosynthesis of morphinan-type benzylisoquinoline and opiate alkaloids natural products. Catalyzes the formation of the morphinan alkaloid salutaridine by intramolecular phenol oxidation of (R)-reticuline without the incorporation of oxygen into the product. Can also use (R)-norreticuline as substrate. The polypeptide is Salutaridine synthase (Papaver somniferum (Opium poppy)).